The sequence spans 432 residues: Transcobalamin-2 (432 aa).

The first 18 residues, 1–18 (MGHLGALLFLLGGLGALA), serve as a signal peptide directing secretion. Intrachain disulfides connect C21–C270, C116–C312, and C165–C208. N94 carries N-linked (GlcNAc...) asparagine glycosylation. Cob(II)alamin is bound by residues Q104, 152 to 156 (TSYYQ), H193, 193 to 197 (HVSVD), N245, S248, Q294, and 400 to 402 (WQV).

It belongs to the eukaryotic cobalamin transport proteins family. In terms of assembly, interacts with CD320 (via LDL-receptor class A domains). As to expression, expressed in mammary gland, kidney, lymphatic nodes and liver.

The protein resides in the secreted. Its function is as follows. Primary vitamin B12-binding and transport protein. Delivers cobalamin to cells. This is Transcobalamin-2 (TCN2) from Bos taurus (Bovine).